Reading from the N-terminus, the 266-residue chain is Imidazole glycerol phosphate synthase subunit HisF (266 aa).

Residues Asp11 and Asp130 contribute to the active site.

Belongs to the HisA/HisF family. Heterodimer of HisH and HisF.

Its subcellular location is the cytoplasm. It carries out the reaction 5-[(5-phospho-1-deoxy-D-ribulos-1-ylimino)methylamino]-1-(5-phospho-beta-D-ribosyl)imidazole-4-carboxamide + L-glutamine = D-erythro-1-(imidazol-4-yl)glycerol 3-phosphate + 5-amino-1-(5-phospho-beta-D-ribosyl)imidazole-4-carboxamide + L-glutamate + H(+). It functions in the pathway amino-acid biosynthesis; L-histidine biosynthesis; L-histidine from 5-phospho-alpha-D-ribose 1-diphosphate: step 5/9. Functionally, IGPS catalyzes the conversion of PRFAR and glutamine to IGP, AICAR and glutamate. The HisF subunit catalyzes the cyclization activity that produces IGP and AICAR from PRFAR using the ammonia provided by the HisH subunit. This is Imidazole glycerol phosphate synthase subunit HisF from Delftia acidovorans (strain DSM 14801 / SPH-1).